A 240-amino-acid polypeptide reads, in one-letter code: LexA repressor (240 aa).

Positions 26 to 46 form a DNA-binding region, H-T-H motif; sequence FDEMKDALDLASKSGIHRLIT. Active-site for autocatalytic cleavage activity residues include Ser-160 and Lys-198.

Belongs to the peptidase S24 family. In terms of assembly, homodimer.

The enzyme catalyses Hydrolysis of Ala-|-Gly bond in repressor LexA.. Its function is as follows. Represses a number of genes involved in the response to DNA damage (SOS response), including recA and lexA. In the presence of single-stranded DNA, RecA interacts with LexA causing an autocatalytic cleavage which disrupts the DNA-binding part of LexA, leading to derepression of the SOS regulon and eventually DNA repair. The sequence is that of LexA repressor from Agrobacterium fabrum (strain C58 / ATCC 33970) (Agrobacterium tumefaciens (strain C58)).